The sequence spans 305 residues: Phosphatidate cytidylyltransferase (305 aa).

Helical transmembrane passes span F27–L47, F67–C87, F96–V116, L124–I144, I150–L170, T202–S222, I232–G252, and M277–I297.

Belongs to the CDS family.

It localises to the cell membrane. The catalysed reaction is a 1,2-diacyl-sn-glycero-3-phosphate + CTP + H(+) = a CDP-1,2-diacyl-sn-glycerol + diphosphate. It participates in phospholipid metabolism; CDP-diacylglycerol biosynthesis; CDP-diacylglycerol from sn-glycerol 3-phosphate: step 3/3. The protein is Phosphatidate cytidylyltransferase (cdsA) of Chlamydia trachomatis serovar D (strain ATCC VR-885 / DSM 19411 / UW-3/Cx).